Here is a 518-residue protein sequence, read N- to C-terminus: Anthranilate synthase component 1 (518 aa).

Residues S41 and 291–293 (PYM) each bind L-tryptophan. Residue 328–329 (GS) participates in chorismate binding. E361 is a binding site for Mg(2+). Chorismate-binding positions include Y449, R469, 483–485 (GCG), and G485. E498 provides a ligand contact to Mg(2+).

It belongs to the anthranilate synthase component I family. Heterotetramer consisting of two non-identical subunits: a beta subunit (TrpG) and a large alpha subunit (TrpE). Mg(2+) serves as cofactor.

The enzyme catalyses chorismate + L-glutamine = anthranilate + pyruvate + L-glutamate + H(+). Its pathway is amino-acid biosynthesis; L-tryptophan biosynthesis; L-tryptophan from chorismate: step 1/5. Feedback inhibited by tryptophan. Functionally, part of a heterotetrameric complex that catalyzes the two-step biosynthesis of anthranilate, an intermediate in the biosynthesis of L-tryptophan. In the first step, the glutamine-binding beta subunit (TrpG) of anthranilate synthase (AS) provides the glutamine amidotransferase activity which generates ammonia as a substrate that, along with chorismate, is used in the second step, catalyzed by the large alpha subunit of AS (TrpE) to produce anthranilate. In the absence of TrpG, TrpE can synthesize anthranilate directly from chorismate and high concentrations of ammonia. The chain is Anthranilate synthase component 1 (trpE) from Haemophilus influenzae (strain ATCC 51907 / DSM 11121 / KW20 / Rd).